We begin with the raw amino-acid sequence, 869 residues long: NACHT, LRR and PYD domains-containing protein 6 (869 aa).

The Pyrin domain occupies 37–128 (KLRDAPLDGR…REHVLRQHAK (92 aa)). The region spanning 194–511 (LTVVLQGPAG…EFLAALSYLL (318 aa)) is the NACHT domain. 200–207 (GPAGIGKT) is a binding site for ATP. Residues 350 to 354 (KDKKK) are disordered. An LRR 1 repeat occupies 460-485 (EEDLEKLKLRGSQVQTIFLNKKEIPG). Positions 577-608 (VQGQSHPKGPPVGAKKTAELEDIEDAEEEEEE) are disordered. Residues 596 to 608 (LEDIEDAEEEEEE) are compositionally biased toward acidic residues. LRR repeat units follow at residues 635–658 (LSSL…VLNY) and 837–860 (TLSL…KTSK).

Belongs to the NLRP family. In terms of assembly, homomultimer; forms the NLRP6 inflammasome polymeric complex, a filament composed of homopolymers in response to pathogens and other damage-associated signals. The core of NLRP6 inflammasomes consists of a signal sensor component (NLRP6), an adapter (PYCARD/ASC), which recruits effector pro-inflammatory caspases (CASP1 and CASP4). Interacts (via pyrin domain) with PYCARD/ASC (via pyrin domain); interaction takes place following NLRP6 activation and formation of liquid-liquid phase separation (LLPS), initiating nucleation which greatly enhances further addition of soluble PYCARD/ASC molecules to the speck in a prion-like polymerization process. Clustered PYCARD/ASC nucleates the formation of CASP1 (or possibly CASP4) filaments through the interaction of their respective CARD domains, acting as a platform for CASP1 polymerization. CASP1 filament formation increases local enzyme concentration, resulting in trans-autocleavage and activation. Active CASP1 then processes IL1B and IL18 precursors, leading to the release of mature cytokines in the extracellular milieu and inflammatory response. Interacts with DHX15. Polyubiquitinated with 'Lys-63'-linked chains, promoting the interaction with PYCARD/ASC and formation of the NLRP6 inflammasome. Deubiquitination by CYLD decreases the interaction with PYCARD/ASC. Highly expressed in the gastrointestinal tract, predominantly in colonic myofibroblasts and in colonic epithelial and endothelial cells. Within the intestinal mucosa, highly expressed by goblet cells. Also expressed in hepatocytes and in immune cells, including CD4(+) and CD8(+) T-cells, dendritic cells, mastocytes and peritoneal macrophages, as well as in lung, kidney, bladder and gonads.

The protein localises to the cytoplasm. It is found in the inflammasome. The protein resides in the cell membrane. Its subcellular location is the nucleus membrane. In terms of biological role, acts as the sensor component of the NLRP6 inflammasome, which mediates inflammasome activation in response to various pathogen-associated signals, leading to maturation and secretion of IL1B and IL18. Inflammasomes are supramolecular complexes that assemble in the cytosol in response to pathogens and other damage-associated signals and play critical roles in innate immunity and inflammation. Acts as a recognition receptor (PRR): recognizes and binds specific pathogens and other damage-associated signals, such as lipoteichoic acid (LTA), a cell-wall component of Gram-positive bacteria, or double stranded RNA (dsRNA). May also recognize and bind lipopolysaccharide (LPS), a major component of the outer membrane of Gram-negative bacteria; however, LPS is probably not a major activator of the NLRP6 inflammasome. Following LTA- or dsRNA-binding, NLRP6 undergoes liquid-liquid phase separation (LLPS), enhancing multivalent interactions, an essential step for the formation of the NLRP6 inflammasome polymeric complex. The NLRP6 inflammasome acts by promoting recruitment of effector pro-inflammatory caspases (CASP1 and/or CASP4) that catalyze maturation and secretion of IL1B and IL18 in the extracellular milieu. The NLRP6 inflammasome plays a central role in the maintenance of epithelial integrity and host defense against microbial infections in the intestine. Required to restrict infection against Gram-positive bacteria by recognizing lipoteichoic acid (LTA), leading to recruitment of CASP4 and CASP1, and subsequent maturation and secretion of IL1B and IL18. Involved in intestinal antiviral innate immunity together with DHX15: recognizes and binds viral dsRNA to restrict infection by enteric viruses through the interferon pathway and GSDMD-dependent release of IL18. Required to prevent infection by the apicomplexan parasite C.tyzzeri in enterocytes by promoting GSDMD-dependent release of IL18. The NLRP6 inflammasome may also regulate the gut microbiota composition by acting as a sensor of microbiota-associated metabolites to form a PYCARD/ASC-dependent inflammasome for downstream IL18 release and secretion of antimicrobial peptides. Its role in the regulation of the gut microbiota composition is however subject to discussion. Essential for gut mucosal self-renewal and proliferation. Regulate mucus secretion in an inflammasome- and autophagy-dependent manner to prevent invasion by enteric bacteria. During systemic bacterial infections, the NLRP6 inflammasome negatively regulates neutrophil recruitment and neutrophil extracellular traps (NETs) formation. May promote peripheral nerve recovery following injury via an inflammasome-independent mechanism. This Mus musculus (Mouse) protein is NACHT, LRR and PYD domains-containing protein 6.